Reading from the N-terminus, the 149-residue chain is Early lymphoid activation gene protein (149 aa).

Expressed in heart, kidney, lung, and skeletal muscle, with lower levels in pancreas and liver.

In terms of biological role, may function as an early signal that helps mediate the activation of T-cells. In Homo sapiens (Human), this protein is Early lymphoid activation gene protein (DIAPH2-AS1).